Reading from the N-terminus, the 148-residue chain is Lipid droplet organization protein LDO16 (148 aa).

The Cytoplasmic portion of the chain corresponds to 1 to 7 (MVSTATF). Residues 8-28 (FFFVYLTLFVVIGFFSSLFII) traverse the membrane as a helical segment. Pro29 is a topological domain (lumenal). Residues 30–50 (LLGISFVFAIGVVSFGFCSNM) traverse the membrane as a helical segment. Topologically, residues 51–148 (SFKMAQLIYV…NKAGNKFQLS (98 aa)) are cytoplasmic. A disordered region spans residues 83-110 (QEPQEPLSTLRPVSNPTIPSPLRQTARP). Positions 93 to 109 (RPVSNPTIPSPLRQTAR) are enriched in polar residues. Ser102 bears the Phosphoserine mark.

It belongs to the OSW5 family. In terms of assembly, interacts specifically with the seipin complex FLD1-LDB16. Only a fraction appears to associate with the seipin core components, suggesting that it may be an ancillary subunit of the complex. Found to interact with many mitochondrial and peroxisomal proteins.

Its subcellular location is the endoplasmic reticulum membrane. It is found in the lipid droplet. Its function is as follows. Involved in lipid droplet (LD) organization. Functions primarily upon nutrient depletion, facilitating LD consumption by lipophagy. Required for correct LD distribution during entry into stationary phase, where LDs accumulate at nucleus-vacuole junction (NVJ) contact sites. Involved in membrane interaction in a manner similar to those of SNARE proteins, binding to partners present in mitochondria or peroxisomes. Its partner on the mitochondrion side might be TOM22, a mitochondrial outer membrane protein, linking lipid droplets and mitochondria by protein-protein interaction. Involved in spore wall assembly. The protein is Lipid droplet organization protein LDO16 of Saccharomyces cerevisiae (strain ATCC 204508 / S288c) (Baker's yeast).